The chain runs to 309 residues: Glutaminase (309 aa).

Residues serine 64, asparagine 114, glutamate 160, asparagine 167, tyrosine 191, tyrosine 243, and valine 261 each coordinate substrate.

Belongs to the glutaminase family. In terms of assembly, homotetramer.

The enzyme catalyses L-glutamine + H2O = L-glutamate + NH4(+). The polypeptide is Glutaminase (Rhodopseudomonas palustris (strain BisB18)).